Consider the following 618-residue polypeptide: DNA mismatch repair protein MutL (618 aa).

Residues 348–359 are compositionally biased toward polar residues; that stretch reads QTDTARSPTGNF. Positions 348-400 are disordered; the sequence is QTDTARSPTGNFESGEVFDYPKSQLQPSHSVSSGGASLGSRSAGGSGGAYRAT. Positions 377–388 are enriched in low complexity; sequence SVSSGGASLGSR.

The protein belongs to the DNA mismatch repair MutL/HexB family.

Functionally, this protein is involved in the repair of mismatches in DNA. It is required for dam-dependent methyl-directed DNA mismatch repair. May act as a 'molecular matchmaker', a protein that promotes the formation of a stable complex between two or more DNA-binding proteins in an ATP-dependent manner without itself being part of a final effector complex. This is DNA mismatch repair protein MutL from Pseudoalteromonas translucida (strain TAC 125).